The sequence spans 129 residues: Small ribosomal subunit protein uS11 (129 aa).

This sequence belongs to the universal ribosomal protein uS11 family. In terms of assembly, part of the 30S ribosomal subunit. Interacts with proteins S7 and S18. Binds to IF-3.

In terms of biological role, located on the platform of the 30S subunit, it bridges several disparate RNA helices of the 16S rRNA. Forms part of the Shine-Dalgarno cleft in the 70S ribosome. This Hahella chejuensis (strain KCTC 2396) protein is Small ribosomal subunit protein uS11.